A 217-amino-acid polypeptide reads, in one-letter code: ATP-dependent Clp protease proteolytic subunit (217 aa).

The active-site Nucleophile is S119. The active site involves H144.

Belongs to the peptidase S14 family. As to quaternary structure, fourteen ClpP subunits assemble into 2 heptameric rings which stack back to back to give a disk-like structure with a central cavity, resembling the structure of eukaryotic proteasomes.

It is found in the cytoplasm. It catalyses the reaction Hydrolysis of proteins to small peptides in the presence of ATP and magnesium. alpha-casein is the usual test substrate. In the absence of ATP, only oligopeptides shorter than five residues are hydrolyzed (such as succinyl-Leu-Tyr-|-NHMec, and Leu-Tyr-Leu-|-Tyr-Trp, in which cleavage of the -Tyr-|-Leu- and -Tyr-|-Trp bonds also occurs).. Cleaves peptides in various proteins in a process that requires ATP hydrolysis. Has a chymotrypsin-like activity. Plays a major role in the degradation of misfolded proteins. The sequence is that of ATP-dependent Clp protease proteolytic subunit from Bordetella bronchiseptica (strain ATCC BAA-588 / NCTC 13252 / RB50) (Alcaligenes bronchisepticus).